A 384-amino-acid chain; its full sequence is Putative spore germination protein YfkR (384 aa).

An N-terminal signal peptide occupies residues 1 to 20 (MKKTIYKCVLPLLICILLTG). Cys21 carries N-palmitoyl cysteine lipidation. A lipid anchor (S-diacylglycerol cysteine) is attached at Cys21.

This sequence belongs to the GerABKC lipoprotein family.

Its subcellular location is the cell membrane. Functionally, may be involved in spore germination. The chain is Putative spore germination protein YfkR (yfkR) from Bacillus subtilis (strain 168).